A 196-amino-acid polypeptide reads, in one-letter code: Anthranilate synthase component 2 (196 aa).

The Glutamine amidotransferase type-1 domain occupies 3–196 (VILIIDNYDS…RTVIRNFLRM (194 aa)). 60–62 (GPG) contacts L-glutamine. The Nucleophile; for GATase activity role is filled by Cys89. Residues Gln93 and 138–139 (SL) contribute to the L-glutamine site. Catalysis depends on for GATase activity residues His177 and Glu179.

In terms of assembly, heterotetramer consisting of two non-identical subunits: a beta subunit (TrpG) and a large alpha subunit (TrpE).

The enzyme catalyses chorismate + L-glutamine = anthranilate + pyruvate + L-glutamate + H(+). It functions in the pathway amino-acid biosynthesis; L-tryptophan biosynthesis; L-tryptophan from chorismate: step 1/5. Part of a heterotetrameric complex that catalyzes the two-step biosynthesis of anthranilate, an intermediate in the biosynthesis of L-tryptophan. In the first step, the glutamine-binding beta subunit (TrpG) of anthranilate synthase (AS) provides the glutamine amidotransferase activity which generates ammonia as a substrate that, along with chorismate, is used in the second step, catalyzed by the large alpha subunit of AS (TrpE) to produce anthranilate. In the absence of TrpG, TrpE can synthesize anthranilate directly from chorismate and high concentrations of ammonia. This chain is Anthranilate synthase component 2 (trpG), found in Methanothermobacter thermautotrophicus (strain ATCC 29096 / DSM 1053 / JCM 10044 / NBRC 100330 / Delta H) (Methanobacterium thermoautotrophicum).